We begin with the raw amino-acid sequence, 313 residues long: MRQTSVARLYEDQGPRLQLTHVSGPLDAVLSVAEERMWPADLVGHLNLIHPTRLQVLGAAELEWARRQSREKVAHHLNGILSARPPAIIVADGCETPNIVHGVCTAHNVALFSTPHPSASVIDQLRLYLSRQLAEKISLHGVFMDVLGIGVFITGNSGAGKSELALELISRGHGLVADDIVEFSRTAPTVLEGRCPELLKDFIEVRGLGILNIRTIFGETACRRKMRLRLVCHLERRQPGQDDPNRLPVQQEQQVILGVSTPRVTLPVAAGRNLAVLLEAAVRSTILQLRGVDSTQEFIDRQSRMLMGDGDGL.

Residues H140 and K161 contribute to the active site. ATP is bound at residue 155–162 (GNSGAGKS). Residue S162 participates in Mg(2+) binding. The Proton acceptor; for phosphorylation activity. Proton donor; for dephosphorylation activity role is filled by D179. The tract at residues 203-212 (IEVRGLGILN) is important for the catalytic mechanism of both phosphorylation and dephosphorylation. E204 contacts Mg(2+). Residue R246 is part of the active site. The important for the catalytic mechanism of dephosphorylation stretch occupies residues 267–272 (PVAAGR).

The protein belongs to the HPrK/P family. As to quaternary structure, homohexamer. It depends on Mg(2+) as a cofactor.

The enzyme catalyses [HPr protein]-L-serine + ATP = [HPr protein]-O-phospho-L-serine + ADP + H(+). The catalysed reaction is [HPr protein]-O-phospho-L-serine + phosphate + H(+) = [HPr protein]-L-serine + diphosphate. In terms of biological role, catalyzes the ATP- as well as the pyrophosphate-dependent phosphorylation of a specific serine residue in HPr, a phosphocarrier protein of the phosphoenolpyruvate-dependent sugar phosphotransferase system (PTS). HprK/P also catalyzes the pyrophosphate-producing, inorganic phosphate-dependent dephosphorylation (phosphorolysis) of seryl-phosphorylated HPr (P-Ser-HPr). This chain is HPr kinase/phosphorylase, found in Azoarcus sp. (strain BH72).